Here is a 922-residue protein sequence, read N- to C-terminus: Probable outer membrane protein pmp1 (922 aa).

The signal sequence occupies residues 1–26; sequence MRFSLCGFPLVFSFTLLSVFDTSLSA. The Autotransporter domain occupies 620–922; sequence SLQTDRGLWI…NINCGSKFRF (303 aa).

The protein belongs to the PMP outer membrane protein family.

Its subcellular location is the secreted. It is found in the cell wall. The protein resides in the cell outer membrane. The protein is Probable outer membrane protein pmp1 (pmp1) of Chlamydia pneumoniae (Chlamydophila pneumoniae).